The primary structure comprises 131 residues: Ribonuclease VapC42 (131 aa).

Positions 1–125 (MIVDTSAIVA…FRGDDFTHTD (125 aa)) constitute a PINc domain. Mg(2+) contacts are provided by aspartate 4 and aspartate 100.

It belongs to the PINc/VapC protein family. It depends on Mg(2+) as a cofactor.

Toxic component of a type II toxin-antitoxin (TA) system. An RNase. Its cognate antitoxin is VapB42. This is Ribonuclease VapC42 from Mycobacterium tuberculosis (strain CDC 1551 / Oshkosh).